A 140-amino-acid chain; its full sequence is Putative pre-16S rRNA nuclease (140 aa).

The protein belongs to the YqgF nuclease family.

It localises to the cytoplasm. Its function is as follows. Could be a nuclease involved in processing of the 5'-end of pre-16S rRNA. The chain is Putative pre-16S rRNA nuclease from Mannheimia succiniciproducens (strain KCTC 0769BP / MBEL55E).